Here is a 160-residue protein sequence, read N- to C-terminus: Early E3 18.5 kDa glycoprotein (160 aa).

The first 17 residues, M1–G17, serve as a signal peptide directing secretion. At T18–G124 the chain is on the lumenal side. 2 disulfides stabilise this stretch: C29-C46 and C40-C101. 2 N-linked (GlcNAc...) asparagine; by host glycosylation sites follow: N30 and N79. The helical transmembrane segment at T125–I145 threads the bilayer. At K146–P160 the chain is on the cytoplasmic side. The Di-lysine motif motif lies at K157–P160.

This sequence belongs to the adenoviridae E19 family. In terms of processing, both disulfide bonds are absolutely critical for the interaction with MHC antigens. N-glycosylated; high-mannose.

It localises to the host endoplasmic reticulum membrane. Binds and retains class I heavy chains in the endoplasmic reticulum during the early period of virus infection, thereby impairing their transport to the cell surface. Also delays the expression of class I alleles that it cannot affect by direct retention. Binds transporters associated with antigen processing (TAP) and acts as a tapasin inhibitor, preventing class I/TAP association. In consequence, infected cells are masked for immune recognition by cytotoxic T-lymphocytes. In Homo sapiens (Human), this protein is Early E3 18.5 kDa glycoprotein.